The chain runs to 391 residues: GTPase Obg (391 aa).

The Obg domain maps to methionine 1 to leucine 159. Residues alanine 160–glutamate 333 form the OBG-type G domain. GTP is bound by residues glycine 166 to serine 173, phenylalanine 191 to valine 195, aspartate 213 to glycine 216, asparagine 283 to aspartate 286, and serine 314 to alanine 316. Serine 173 and threonine 193 together coordinate Mg(2+).

It belongs to the TRAFAC class OBG-HflX-like GTPase superfamily. OBG GTPase family. Monomer. It depends on Mg(2+) as a cofactor.

The protein resides in the cytoplasm. An essential GTPase which binds GTP, GDP and possibly (p)ppGpp with moderate affinity, with high nucleotide exchange rates and a fairly low GTP hydrolysis rate. Plays a role in control of the cell cycle, stress response, ribosome biogenesis and in those bacteria that undergo differentiation, in morphogenesis control. This chain is GTPase Obg, found in Haemophilus ducreyi (strain 35000HP / ATCC 700724).